The following is a 336-amino-acid chain: Probable RNA methyltransferase Anae109_4379 (336 aa).

E86 acts as the Proton acceptor in catalysis. The Radical SAM core domain maps to 93–322 (FDTHHTVCLS…PIVRRYSGGQ (230 aa)). A disulfide bridge connects residues C100 and C328. Residues C107, C111, and C114 each contribute to the [4Fe-4S] cluster site. S-adenosyl-L-methionine-binding positions include 154–155 (GE), S186, and 209–211 (SLN). The active-site S-methylcysteine intermediate is C328.

It belongs to the radical SAM superfamily. RlmN family. It depends on [4Fe-4S] cluster as a cofactor.

The protein resides in the cytoplasm. The polypeptide is Probable RNA methyltransferase Anae109_4379 (Anaeromyxobacter sp. (strain Fw109-5)).